The primary structure comprises 82 residues: Large ribosomal subunit protein bL27 (82 aa).

A disordered region spans residues 1–20 (MAHKKGASSSRNGRDSNPQY). A compositionally biased stretch (polar residues) spans 7–19 (ASSSRNGRDSNPQ).

It belongs to the bacterial ribosomal protein bL27 family.

The polypeptide is Large ribosomal subunit protein bL27 (Bifidobacterium longum (strain NCC 2705)).